Reading from the N-terminus, the 313-residue chain is NAD-capped RNA hydrolase NudC (313 aa).

Arg111 serves as a coordination point for substrate. The Nudix hydrolase domain maps to 168–293 (PRIDPAVICL…DWSSASESKL (126 aa)). A divalent metal cation contacts are provided by Ala202, Glu218, and Glu222. Residues 203-224 (GFVEAGESFEVCVAREIREEIG) carry the Nudix box motif. Substrate is bound at residue 236 to 243 (QPWPFPRS). Glu264 contributes to the a divalent metal cation binding site.

It belongs to the Nudix hydrolase family. NudC subfamily. Homodimer. Mg(2+) serves as cofactor. Requires Mn(2+) as cofactor.

It catalyses the reaction a 5'-end NAD(+)-phospho-ribonucleoside in mRNA + H2O = a 5'-end phospho-adenosine-phospho-ribonucleoside in mRNA + beta-nicotinamide D-ribonucleotide + 2 H(+). The enzyme catalyses NAD(+) + H2O = beta-nicotinamide D-ribonucleotide + AMP + 2 H(+). It carries out the reaction NADH + H2O = reduced beta-nicotinamide D-ribonucleotide + AMP + 2 H(+). Functionally, mRNA decapping enzyme that specifically removes the nicotinamide adenine dinucleotide (NAD) cap from a subset of mRNAs by hydrolyzing the diphosphate linkage to produce nicotinamide mononucleotide (NMN) and 5' monophosphate mRNA. The NAD-cap is present at the 5'-end of some mRNAs and stabilizes RNA against 5'-processing. Has preference for mRNAs with a 5'-end purine. Catalyzes the hydrolysis of a broad range of dinucleotide pyrophosphates. This is NAD-capped RNA hydrolase NudC from Mycobacterium bovis (strain ATCC BAA-935 / AF2122/97).